Consider the following 379-residue polypeptide: Eukaryotic translation initiation factor 3 subunit M (379 aa).

The region spanning 179–341 (RSEEASKVMI…RKVIISSVAQ (163 aa)) is the PCI domain.

Belongs to the eIF-3 subunit M family. In terms of assembly, component of the eukaryotic translation initiation factor 3 (eIF-3) complex.

The protein localises to the cytoplasm. Functionally, component of the eukaryotic translation initiation factor 3 (eIF-3) complex, which is involved in protein synthesis of a specialized repertoire of mRNAs and, together with other initiation factors, stimulates binding of mRNA and methionyl-tRNAi to the 40S ribosome. The eIF-3 complex specifically targets and initiates translation of a subset of mRNAs involved in cell proliferation. The chain is Eukaryotic translation initiation factor 3 subunit M from Nematostella vectensis (Starlet sea anemone).